A 168-amino-acid polypeptide reads, in one-letter code: Photosystem I assembly protein Ycf3 (168 aa).

3 TPR repeats span residues 35-68 (AFTYYRDGMSAQSEGNYAEALQNYYEATRPEIDP), 72-105 (SYILYNIGLIHTSNGEHTKALEYYFRALERNPFL), and 120-153 (GEQAILQGDSEIAEAWSDQAAEYWKQAIALTPGN).

The protein belongs to the Ycf3 family.

It is found in the plastid. The protein resides in the chloroplast thylakoid membrane. Functionally, essential for the assembly of the photosystem I (PSI) complex. May act as a chaperone-like factor to guide the assembly of the PSI subunits. This Lemna minor (Common duckweed) protein is Photosystem I assembly protein Ycf3.